The sequence spans 319 residues: Homoserine kinase (319 aa).

Pro-100–Ser-110 lines the ATP pocket.

This sequence belongs to the GHMP kinase family. Homoserine kinase subfamily.

It is found in the cytoplasm. The catalysed reaction is L-homoserine + ATP = O-phospho-L-homoserine + ADP + H(+). Its pathway is amino-acid biosynthesis; L-threonine biosynthesis; L-threonine from L-aspartate: step 4/5. Catalyzes the ATP-dependent phosphorylation of L-homoserine to L-homoserine phosphate. The chain is Homoserine kinase from Chloroherpeton thalassium (strain ATCC 35110 / GB-78).